The following is a 299-amino-acid chain: Pyrroline-5-carboxylate reductase 2 (299 aa).

It belongs to the pyrroline-5-carboxylate reductase family. As to quaternary structure, homodecamer; composed of 5 homodimers.

The enzyme catalyses L-proline + NADP(+) = (S)-1-pyrroline-5-carboxylate + NADPH + 2 H(+). It catalyses the reaction L-proline + NAD(+) = (S)-1-pyrroline-5-carboxylate + NADH + 2 H(+). The protein operates within amino-acid biosynthesis; L-proline biosynthesis; L-proline from L-glutamate 5-semialdehyde: step 1/1. This chain is Pyrroline-5-carboxylate reductase 2 (pycr2), found in Dictyostelium discoideum (Social amoeba).